Here is a 355-residue protein sequence, read N- to C-terminus: 3-dehydroquinate synthase (355 aa).

Residues 98-102 (GVVGD), 122-123 (TT), lysine 135, lysine 144, and 162-165 (TLDT) each bind NAD(+). Residues glutamate 177, histidine 240, and histidine 257 each coordinate Zn(2+).

The protein belongs to the sugar phosphate cyclases superfamily. Dehydroquinate synthase family. Requires Co(2+) as cofactor. Zn(2+) serves as cofactor. The cofactor is NAD(+).

Its subcellular location is the cytoplasm. It catalyses the reaction 7-phospho-2-dehydro-3-deoxy-D-arabino-heptonate = 3-dehydroquinate + phosphate. It functions in the pathway metabolic intermediate biosynthesis; chorismate biosynthesis; chorismate from D-erythrose 4-phosphate and phosphoenolpyruvate: step 2/7. Its function is as follows. Catalyzes the conversion of 3-deoxy-D-arabino-heptulosonate 7-phosphate (DAHP) to dehydroquinate (DHQ). This chain is 3-dehydroquinate synthase, found in Dictyoglomus turgidum (strain DSM 6724 / Z-1310).